A 199-amino-acid chain; its full sequence is ATP synthase subunit a (199 aa).

The next 6 membrane-spanning stretches (helical) occupy residues 2–22 (TNVY…LFYF), 25–45 (SMLG…FSYT), 53–73 (VISV…YFMY), 80–100 (MIEF…LTFI), 143–163 (VNVL…ELYL), and 164–184 (GIFY…VFFI).

It belongs to the ATPase A chain family. In terms of assembly, F-type ATPases have 2 components, CF(1) - the catalytic core - and CF(0) - the membrane proton channel. CF(1) has five subunits: alpha(3), beta(3), gamma(1), delta(1), epsilon(1). CF(0) has three main subunits: a, b and c.

The protein localises to the mitochondrion inner membrane. In terms of biological role, mitochondrial membrane ATP synthase (F(1)F(0) ATP synthase or Complex V) produces ATP from ADP in the presence of a proton gradient across the membrane which is generated by electron transport complexes of the respiratory chain. F-type ATPases consist of two structural domains, F(1) - containing the extramembraneous catalytic core and F(0) - containing the membrane proton channel, linked together by a central stalk and a peripheral stalk. During catalysis, ATP synthesis in the catalytic domain of F(1) is coupled via a rotary mechanism of the central stalk subunits to proton translocation. Key component of the proton channel; it may play a direct role in the translocation of protons across the membrane. The protein is ATP synthase subunit a (ATP6) of Ascaris suum (Pig roundworm).